The primary structure comprises 147 residues: E3 ubiquitin-protein ligase RHA2B (147 aa).

The RING-type; atypical zinc-finger motif lies at 74–116 (CIVCLSKLKTGEEVRKLDCRHVFHKQCLEGWLQHLNFNCPLCR).

In terms of assembly, interacts with NAC19. As to expression, expressed in vascular tissue, root tips, embryos and pistils.

It is found in the cytoplasm. The protein localises to the nucleus. It carries out the reaction S-ubiquitinyl-[E2 ubiquitin-conjugating enzyme]-L-cysteine + [acceptor protein]-L-lysine = [E2 ubiquitin-conjugating enzyme]-L-cysteine + N(6)-ubiquitinyl-[acceptor protein]-L-lysine.. The protein operates within protein modification; protein ubiquitination. Its function is as follows. E3 ubiquitin-protein ligase involved in the positive regulation of abscisic acid (ABA) signaling and responses to salt and osmotic stresses during seed germination and early seedling development. Acts additively with RHA2A in regulating ABA signaling and drought response. Possesses E3 ubiquitin ligase activity in vitro. This Arabidopsis thaliana (Mouse-ear cress) protein is E3 ubiquitin-protein ligase RHA2B.